We begin with the raw amino-acid sequence, 700 residues long: Transketolase (700 aa).

Substrate is bound at residue His-45. Thiamine diphosphate-binding positions include Thr-48, His-85, and 133 to 135 (GPL). Asp-177 is a Mg(2+) binding site. Residues Gly-178 and Asn-207 each contribute to the thiamine diphosphate site. Positions 207 and 209 each coordinate Mg(2+). The substrate site is built by His-283, Arg-378, and Ser-405. Position 283 (His-283) interacts with thiamine diphosphate. The Proton donor role is filled by Glu-441. Phe-467 lines the thiamine diphosphate pocket. Residues His-491, Asp-499, and Arg-552 each contribute to the substrate site.

It belongs to the transketolase family. As to quaternary structure, homodimer. Mg(2+) serves as cofactor. It depends on Ca(2+) as a cofactor. Requires Mn(2+) as cofactor. Co(2+) is required as a cofactor. The cofactor is thiamine diphosphate.

The catalysed reaction is D-sedoheptulose 7-phosphate + D-glyceraldehyde 3-phosphate = aldehydo-D-ribose 5-phosphate + D-xylulose 5-phosphate. Catalyzes the transfer of a two-carbon ketol group from a ketose donor to an aldose acceptor, via a covalent intermediate with the cofactor thiamine pyrophosphate. The polypeptide is Transketolase (tkt) (Mycobacterium bovis (strain ATCC BAA-935 / AF2122/97)).